The following is a 600-amino-acid chain: CDK5RAP1-like protein (600 aa).

A disordered region spans residues 45–66 (LSSAAHPPPPPPRRLARSGPSR). The region spanning 93 to 222 (GRIYHETYGC…LPRLLQEVDY (130 aa)) is the MTTase N-terminal domain. Cys-102, Cys-139, Cys-185, Cys-260, Cys-264, and Cys-267 together coordinate [4Fe-4S] cluster. Residues 246–501 (SDNSVTAFVS…ISTFRETTAK (256 aa)) enclose the Radical SAM core domain. The 77-residue stretch at 504–580 (DSQVGTVQLV…TASLSGDVIA (77 aa)) folds into the TRAM domain.

It belongs to the methylthiotransferase family. MiaB subfamily. Requires [4Fe-4S] cluster as cofactor.

Functionally, potential regulator of CDK5 activity. This is CDK5RAP1-like protein from Oryza sativa subsp. japonica (Rice).